A 394-amino-acid polypeptide reads, in one-letter code: Obg-like ATPase 1 (394 aa).

Residues 25–282 (LKIGIVGLPN…MPPDEAAKYC (258 aa)) form the OBG-type G domain. ATP is bound by residues 34–39 (NVGKST), 56–60 (FCTID), and 94–97 (DIAG). 34 to 39 (NVGKST) lines the GTP pocket. Residues Ser-38 and Thr-58 each contribute to the Mg(2+) site. Residues Phe-129 and Asn-230 each coordinate GTP. Residues 230 to 231 (NM), Met-231, and 263 to 265 (SCA) contribute to the ATP site. 263 to 265 (SCA) contacts GTP. One can recognise a TGS domain in the interval 303–386 (HLIYFFTAGP…QDGDIIFFKF (84 aa)).

This sequence belongs to the TRAFAC class OBG-HflX-like GTPase superfamily. OBG GTPase family. YchF/OLA1 subfamily. In terms of assembly, monomer (Potential). Interacts with GAP1. Mg(2+) serves as cofactor.

The protein localises to the cell membrane. It localises to the cytoplasm. It is found in the cytosol. Its activity is regulated as follows. Activated by GAP1. Functionally, hydrolyzes ATP, and can also hydrolyze GTP with lower efficiency. Has lower affinity for GTP (Potential). Exhibits GTPase activity. Exhibits similar binding affinities and hydrolytic activities toward both GTP and ATP. Binds to the 26 S ribosomal RNA in vitro, but not to the 5.8 S or 18 S rRNA. Confers sensitivity to salinity stress by suppressing the anti-oxidation enzymatic activities and increasing lipid peroxidation thus leading to the accumulation of reactive oxygen species (ROS). In Oryza sativa subsp. japonica (Rice), this protein is Obg-like ATPase 1.